Reading from the N-terminus, the 2723-residue chain is Zinc finger protein 292 (2723 aa).

A C2H2-type 1 zinc finger spans residues 569-591 (YSCPICAKNFNSKETFVPHVTLH). The disordered stretch occupies residues 608 to 633 (RLGRPPKITTTNENQKTNTVAKQEQR). A compositionally biased stretch (polar residues) spans 615–629 (ITTTNENQKTNTVAK). At S654 the chain carries Phosphoserine. 5 consecutive C2H2-type zinc fingers follow at residues 681–705 (FNCPVTFCKKGFKYFKNLIAHVKGH), 722–744 (VICQYCRRHFVSVTHLNDHLQMH), 750–774 (YICIQMKCKAGFNSYAELLTHRKEH), 779–803 (AKCMFPKCGRIFSEAYLLYDHEAQH), and 807–831 (YTCKFTGCGKVYRSQGELEKHLDDH). The segment covering 825-834 (EKHLDDHSTP) has biased composition (basic and acidic residues). The tract at residues 825–860 (EKHLDDHSTPPEKVLPPEAQLNSSGDSIQPSEVNQN) is disordered. A compositionally biased stretch (polar residues) spans 844–860 (QLNSSGDSIQPSEVNQN). A C2H2-type 7 zinc finger spans residues 1098-1123 (FSCQVEGCTRTYNSSQSIGKHMKTAH). Position 1117 is an N6-acetyllysine (K1117). Position 1159 is a phosphoserine (S1159). Residues 1331–1364 (SSTNAQQSAPEKVKKDRGRGPNGKERKPKHNKRA) are disordered. A compositionally biased stretch (basic and acidic residues) spans 1341–1355 (EKVKKDRGRGPNGKE). The C2H2-type 8; degenerate zinc finger occupies 1375 to 1397 (FICSRCYRAFTNPRSLGGHLSKR). Residues 1588–1627 (SFPNSGGPSQNFTSNSSRVSVISGPQNTRSSHLNKKGNSA) show a composition bias toward polar residues. The segment at 1588–1634 (SFPNSGGPSQNFTSNSSRVSVISGPQNTRSSHLNKKGNSASKRRKKV) is disordered. Residues 1827 to 1854 (QSEVSHKEDQIQEILEGLQKLKLENDLS) adopt a coiled-coil conformation. 2 consecutive C2H2-type zinc fingers follow at residues 1902 to 1927 (FVCQNQGCNYSAMTKDALFKHYGKIH) and 1947 to 1972 (FKCVVPTCTKTFTRNSNLRAHCQLVH). The interval 1986-2023 (RPYGRKSQSENVPASRSTQVKKQLAMTEENKKESQPAL) is disordered. The span at 1994 to 2006 (SENVPASRSTQVK) shows a compositional bias: polar residues. K2042 is subject to N6-acetyllysine. Residues 2074-2103 (NTQTKGRKIRRHKKEKEEKKRKKPVSQSLE) are disordered. The segment covering 2078–2097 (KGRKIRRHKKEKEEKKRKKP) has biased composition (basic residues). 4 consecutive C2H2-type zinc fingers follow at residues 2114–2139 (YRCVHQGCFAAFTIQQNLILHYQAVH), 2172–2197 (FRCQVSDCSRIFQAITGLIQHYMKLH), 2216–2241 (FPCDQLECKSSFTTYLNYVVHLEADH), and 2256–2281 (YKCDCEGCDRIYATRSNLLRHIFNKH). 2 stretches are compositionally biased toward basic residues: residues 2285 to 2294 (HKAHLIRPRR) and 2312 to 2322 (KSKHRGTKHSR). The segment at 2285 to 2345 (HKAHLIRPRR…KKKNNLENKN (61 aa)) is disordered. The segment at 2386-2410 (YPCMIKGCTSVVTSESNIIRHYKCH) adopts a C2H2-type 15 zinc-finger fold. Over residues 2441-2452 (QEGAKNDVKDSD) the composition is skewed to basic and acidic residues. Disordered stretches follow at residues 2441–2480 (QEGAKNDVKDSDTCVSESNDNSRTTATVSQKEVEKNEKDE), 2530–2564 (LKRVNKEKNVSQNKKRKVEKAEPASAAELSSVRKE), and 2606–2631 (QKKNTDKDHPNTGNKKGSHSNSRKNI). A compositionally biased stretch (polar residues) spans 2453-2470 (TCVSESNDNSRTTATVSQ). Positions 2606–2615 (QKKNTDKDHP) are enriched in basic and acidic residues.

The protein belongs to the krueppel C2H2-type zinc-finger protein family.

The protein localises to the nucleus. Its function is as follows. May be involved in transcriptional regulation. The protein is Zinc finger protein 292 (ZNF292) of Homo sapiens (Human).